Consider the following 243-residue polypeptide: R-spondin-2 (243 aa).

The first 21 residues, 1–21 (MQFRLFSFALIILNCMDYSHC), serve as a signal peptide directing secretion. 11 disulfides stabilise this stretch: C40-C46, C43-C52, C55-C74, C78-C93, C96-C104, C101-C110, C113-C124, C128-C141, C145-C187, C156-C163, and C196-C203. One copy of the FU repeat lies at 90 to 134 (MNRCARCRIENCDSCFSKDFCTKCKVGFYLHRGRCFDECPDGFAP). The TSP type-1 domain maps to 144–204 (GCEVGHWSEW…RCKMTMRHCP (61 aa)). An N-linked (GlcNAc...) asparagine glycan is attached at N160. Positions 204 to 224 (PGGKRTPKAKEKRNKKKKRKL) are enriched in basic residues. The disordered stretch occupies residues 204 to 243 (PGGKRTPKAKEKRNKKKKRKLIERAQEQHSVFLATDRANQ).

It belongs to the R-spondin family. In terms of assembly, interacts with WNT1. Binds heparin. Interacts with LGR4, LGR5 and LGR6. Interacts with E3 ubiquitin ligases RNF43 and ZNRF3.

The protein resides in the secreted. In terms of biological role, activator of the canonical Wnt signaling pathway by acting as a ligand for LGR4-6 receptors. Upon binding to LGR4-6 (LGR4, LGR5 or LGR6), LGR4-6 associate with phosphorylated LRP6 and frizzled receptors that are activated by extracellular Wnt receptors, triggering the canonical Wnt signaling pathway to increase expression of target genes. Also regulates the canonical Wnt/beta-catenin-dependent pathway and non-canonical Wnt signaling by acting as an inhibitor of ZNRF3, an important regulator of the Wnt signaling pathway. During embryonic development, plays a crucial role in limb specification, amplifying the Wnt signaling pathway independently of LGR4-6 receptors, possibly by acting as a direct antagonistic ligand to RNF43 and ZNRF3, hence governing the number of limbs an embryo should form. This chain is R-spondin-2 (RSPO2), found in Homo sapiens (Human).